Here is a 131-residue protein sequence, read N- to C-terminus: Small ribosomal subunit protein bS6 (131 aa).

The segment at T97 to E131 is disordered. Over residues K104 to A114 the composition is skewed to basic and acidic residues. The segment covering E115–E131 has biased composition (acidic residues).

This sequence belongs to the bacterial ribosomal protein bS6 family.

In terms of biological role, binds together with bS18 to 16S ribosomal RNA. The protein is Small ribosomal subunit protein bS6 of Proteus mirabilis (strain HI4320).